A 427-amino-acid polypeptide reads, in one-letter code: Protein TIFY 6a (427 aa).

Over residues 1-25 the composition is skewed to basic and acidic residues; it reads MERDFLGAIWRKEEAAGKPEEHSDY. Disordered regions lie at residues 1 to 32 and 128 to 154; these read MERD…GGGA and YGVA…HANP. Positions 136–146 are enriched in pro residues; the sequence is FPSPSPSPRHP. Residues 196–231 enclose the Tify domain; sequence QNPKVTQMTIFYDGLVNVFDNIPVEKAQELMLLASR. The interval 296 to 327 is disordered; that stretch reads SFSSSNDSAGPKSGGLPLAVTPLSQASPSQPI. Over residues 317 to 327 the composition is skewed to polar residues; that stretch reads PLSQASPSQPI. Residues 343 to 367 carry the Jas motif; sequence PQARKASLARFLEKRKERVSSVAPY. A Nuclear localization signal motif is present at residues 345-352; that stretch reads ARKASLAR. Residues 361–427 are disordered; it reads VSSVAPYPSS…QEPPSTKLQI (67 aa). 2 stretches are compositionally biased toward polar residues: residues 369–402 and 411–427; these read SSKS…NNCE and RNIS…KLQI.

It belongs to the TIFY/JAZ family. Interacts with COI1A. Interacts with COI1A and COI1B in a coronatine-dependent manner. Coronatine is an analog of jasmonoyl isoleucine (JA-Ile). In terms of processing, ubiquitinated. Targeted for degradation by the SCF(COI1) E3 ubiquitin ligase-proteasome pathway during jasmonate signaling.

Its subcellular location is the nucleus. Functionally, repressor of jasmonate responses. In Oryza sativa subsp. japonica (Rice), this protein is Protein TIFY 6a.